The following is a 31-amino-acid chain: MSDIN-like toxin proprotein 4 (31 aa).

Residues 1–10 (MSDINGTRLP) constitute a propeptide that is removed on maturation. Positions 11-16 (WLATCP) form a cross-link, cyclopeptide (Trp-Pro). Residues 17–31 (CVGEDVNPTLSRGER) constitute a propeptide that is removed on maturation.

It belongs to the MSDIN fungal toxin family. Post-translationally, processed by the macrocyclase-peptidase enzyme POPB to yield a toxic cyclic hexapeptide. POPB first removes 10 residues from the N-terminus. Conformational trapping of the remaining peptide forces the enzyme to release this intermediate rather than proceed to macrocyclization. The enzyme rebinds the remaining peptide in a different conformation and catalyzes macrocyclization of the N-terminal 6 residues.

Its function is as follows. Probable toxin that belongs to the MSDIN-like toxin family responsible for a large number of food poisoning cases and deaths. This Amanita phalloides (Death cap) protein is MSDIN-like toxin proprotein 4.